The following is a 247-amino-acid chain: NH(3)-dependent NAD(+) synthetase (247 aa).

Residue 29–36 (GLSGGVDS) coordinates ATP. A Mg(2+)-binding site is contributed by aspartate 35. Arginine 112 lines the deamido-NAD(+) pocket. Threonine 132 lines the ATP pocket. Glutamate 137 lines the Mg(2+) pocket. Deamido-NAD(+) contacts are provided by lysine 145 and aspartate 152. 2 residues coordinate ATP: lysine 161 and serine 183. 233-234 (HK) is a binding site for deamido-NAD(+).

The protein belongs to the NAD synthetase family. In terms of assembly, homodimer.

The enzyme catalyses deamido-NAD(+) + NH4(+) + ATP = AMP + diphosphate + NAD(+) + H(+). The protein operates within cofactor biosynthesis; NAD(+) biosynthesis; NAD(+) from deamido-NAD(+) (ammonia route): step 1/1. Catalyzes the ATP-dependent amidation of deamido-NAD to form NAD. Uses ammonia as a nitrogen source. This is NH(3)-dependent NAD(+) synthetase from Archaeoglobus fulgidus (strain ATCC 49558 / DSM 4304 / JCM 9628 / NBRC 100126 / VC-16).